The primary structure comprises 311 residues: Homeobox protein knotted-1-like 10 (311 aa).

Disordered stretches follow at residues 1–45 (MEDL…PATT) and 153–184 (LCGG…DAAD). The segment covering 12-22 (SRGGGGGGGGA) has biased composition (gly residues). The 21-residue stretch at 197 to 217 (ELKEMLLKKYSGCLSRLRSEF) folds into the ELK domain. Residues 218–281 (LKKRKKGKLP…NQRKRHWKPS (64 aa)) constitute a DNA-binding region (homeobox; TALE-type).

This sequence belongs to the TALE/KNOX homeobox family.

It localises to the nucleus. Probable transcription factor that may be involved in shoot formation during embryogenesis. In Oryza sativa subsp. indica (Rice), this protein is Homeobox protein knotted-1-like 10 (OSH71).